The sequence spans 463 residues: Cysteine--tRNA ligase (463 aa).

Residue cysteine 33 coordinates Zn(2+). The 'HIGH' region signature appears at 35–45 (PTVYDFAHIGN). Zn(2+) contacts are provided by cysteine 221, histidine 246, and glutamate 250. The short motif at 279 to 283 (KMSKS) is the 'KMSKS' region element. Lysine 282 is an ATP binding site.

The protein belongs to the class-I aminoacyl-tRNA synthetase family. As to quaternary structure, monomer. Requires Zn(2+) as cofactor.

It is found in the cytoplasm. It catalyses the reaction tRNA(Cys) + L-cysteine + ATP = L-cysteinyl-tRNA(Cys) + AMP + diphosphate. In Rhizobium leguminosarum bv. trifolii (strain WSM2304), this protein is Cysteine--tRNA ligase.